We begin with the raw amino-acid sequence, 507 residues long: MEASWLETRWARPLHLALVFCLALVLMQAMKLYLRRQRLLRDLSPFPGPPAHWLLGHQKFLQEDNMETLDEIVKKHPCAFPCWVGPFQAFFYIYDPDYAKIFLSRTDPKMQYLHQLLTPCIGRGLLNLDGPRWFQHRCLLTPAFHQDILKPCVDTMAHSVKVMLDKWEKMWTTQETTIEVFEHINLMTLDIIMKCAFGQETNCQINGTYESYVKATFELGEIISSRLYNFWHHHDIIFKLSPKGHCFQELGKVIHQYTEKIIQDRKKILKNQVKQDDTQTSQIFLDIVLSAQAEDERAFSDADLRAEVNTFMWAGHDASAASISWLLYCLALNPEHQDRCRTEIRSILGDGSSITWEQLDEMSYTTMCIKETLRLIPPVPSISRELSKPLTLPDGHSLPAGMTVVLSIWGLHHNPAVWNDPKVFDPLRFTKENSDQRHPCAFLPFSSGPRNCIGQQFAMLELKVAIALILLHFQVAPDLTRPPAFSSHTVLRPKHGIYLHLKKLLEC.

The chain crosses the membrane as a helical span at residues 14–34 (LHLALVFCLALVLMQAMKLYL). Residue Cys-452 participates in heme binding.

The protein belongs to the cytochrome P450 family. Heme serves as cofactor. As to expression, expressed in brain and aorta. In the brain, expressed in the Purkinje cells of the cerebellum, pyramidal neurons in the dentate gyrus of the hippocampus, cortical forebrain neurons and those of brain stem nuclei (at protein level). In addition to neurons, also expressed in cerebral vascular endothelial cells (at protein level). Also expressed in epithelial cells of the choroid plexus (at protein level). Hardly detectable in heart, lung, kidney and spleen.

It localises to the endoplasmic reticulum membrane. The protein localises to the microsome membrane. It carries out the reaction N-(5Z,8Z,11Z,14Z-eicosatetraenoyl)-ethanolamine + reduced [NADPH--hemoprotein reductase] + O2 = N-(14,15-epoxy-5Z,8Z,11Z-eicosatrienoyl)-ethanolamine + oxidized [NADPH--hemoprotein reductase] + H2O + H(+). Its function is as follows. A cytochrome P450 monooxygenase that selectively catalyzes the epoxidation of the last double bond of the arachidonoyl moiety of anandamide, potentially modulating endocannabinoid signaling. Has no hydroxylase activity toward various fatty acids, steroids and prostaglandins. Mechanistically, uses molecular oxygen inserting one oxygen atom into a substrate, and reducing the second into a water molecule, with two electrons provided by NADPH via cytochrome P450 reductase (CPR; NADPH-ferrihemoprotein reductase). In Mus musculus (Mouse), this protein is Cytochrome P450 4X1.